The primary structure comprises 501 residues: Armadillo repeat-containing protein 6 (501 aa).

Residue Ser-64 is modified to Phosphoserine. ARM repeat units lie at residues 220–264 (GVLP…HAHN), 274–318 (KGLK…DLGG), 319–369 (LSIL…RAGG), and 370–412 (TESI…VEGG). Residue His-263 is modified to Pros-methylhistidine.

The protein belongs to the ARMC6 family. Post-translationally, methylated at His-263 by METTL9.

This is Armadillo repeat-containing protein 6 (ARMC6) from Pongo abelii (Sumatran orangutan).